The chain runs to 115 residues: V-type proton ATPase subunit G (115 aa).

It belongs to the V-ATPase G subunit family. In terms of assembly, V-ATPase is a heteromultimeric enzyme composed of a peripheral catalytic V1 complex (components A to H) attached to an integral membrane V0 proton pore complex (components: a, c, c', c'', d, e, f and VOA1).

It is found in the vacuole membrane. Its function is as follows. Subunit of the V1 complex of vacuolar(H+)-ATPase (V-ATPase), a multisubunit enzyme composed of a peripheral complex (V1) that hydrolyzes ATP and a membrane integral complex (V0) that translocates protons. V-ATPase is responsible for acidifying and maintaining the pH of intracellular compartments. The sequence is that of V-type proton ATPase subunit G (vma-10) from Neurospora crassa (strain ATCC 24698 / 74-OR23-1A / CBS 708.71 / DSM 1257 / FGSC 987).